Consider the following 150-residue polypeptide: Arginine repressor (150 aa).

The protein belongs to the ArgR family.

It is found in the cytoplasm. Its pathway is amino-acid biosynthesis; L-arginine biosynthesis [regulation]. Functionally, regulates arginine biosynthesis genes. The polypeptide is Arginine repressor (Ruminiclostridium cellulolyticum (strain ATCC 35319 / DSM 5812 / JCM 6584 / H10) (Clostridium cellulolyticum)).